The following is a 465-amino-acid chain: UDP-N-acetylmuramate--L-alanine ligase (465 aa).

Residue 112 to 118 (GTHGKTT) coordinates ATP.

Belongs to the MurCDEF family.

The protein localises to the cytoplasm. The catalysed reaction is UDP-N-acetyl-alpha-D-muramate + L-alanine + ATP = UDP-N-acetyl-alpha-D-muramoyl-L-alanine + ADP + phosphate + H(+). It functions in the pathway cell wall biogenesis; peptidoglycan biosynthesis. In terms of biological role, cell wall formation. This Burkholderia mallei (strain NCTC 10247) protein is UDP-N-acetylmuramate--L-alanine ligase.